The chain runs to 198 residues: Endonuclease V (198 aa).

Mg(2+) is bound by residues Asp-38 and Asp-101.

This sequence belongs to the endonuclease V family. Requires Mg(2+) as cofactor.

The protein resides in the cytoplasm. It carries out the reaction Endonucleolytic cleavage at apurinic or apyrimidinic sites to products with a 5'-phosphate.. DNA repair enzyme involved in the repair of deaminated bases. Selectively cleaves double-stranded DNA at the second phosphodiester bond 3' to a deoxyinosine leaving behind the intact lesion on the nicked DNA. This Saccharolobus islandicus (strain Y.N.15.51 / Yellowstone #2) (Sulfolobus islandicus) protein is Endonuclease V.